Consider the following 549-residue polypeptide: uncharacterized protein (549 aa).

This is an uncharacterized protein from Acanthamoeba polyphaga (Amoeba).